A 241-amino-acid polypeptide reads, in one-letter code: Probable xyloglucan-specific endo-beta-1,4-glucanase A (241 aa).

A signal peptide spans 1-15 (MKVLALSALLSLASA). N-linked (GlcNAc...) asparagine glycosylation occurs at asparagine 47.

Belongs to the glycosyl hydrolase 12 (cellulase H) family.

The protein resides in the secreted. The enzyme catalyses xyloglucan + H2O = xyloglucan oligosaccharides.. Functionally, catalyzes endohydrolysis of 1,4-beta-D-glucosidic linkages in xyloglucan with retention of the beta-configuration of the glycosyl residues. Specific for xyloglucan and does not hydrolyze other cell wall components. The protein is Probable xyloglucan-specific endo-beta-1,4-glucanase A (xgeA) of Aspergillus niger (strain ATCC MYA-4892 / CBS 513.88 / FGSC A1513).